A 266-amino-acid chain; its full sequence is Nuclease (266 aa).

The N-terminal stretch at 1-21 (MRFNNKMLALAALLFAAQASA) is a signal peptide. A disulfide bond links C30 and C34. Residue H110 is the Proton acceptor of the active site. Residue N140 coordinates Mg(2+). Residues C222 and C264 are joined by a disulfide bond.

The protein belongs to the DNA/RNA non-specific endonuclease family. In terms of assembly, homodimer. It depends on Mg(2+) as a cofactor.

The protein localises to the secreted. It carries out the reaction Endonucleolytic cleavage to 5'-phosphomononucleotide and 5'-phosphooligonucleotide end-products.. Its function is as follows. Catalyzes the hydrolysis of both DNA and RNA, double- or single-stranded, at the 3'position of the phosphodiester bond to produce 5'-phosphorylated mono-, di-, tri- and tetranucleotides. DNA is a slightly better substrate than RNA. In Serratia marcescens, this protein is Nuclease (nucA).